We begin with the raw amino-acid sequence, 303 residues long: Bidirectional sugar transporter SWEET14 (303 aa).

At 1 to 9 (MAGMSLQHP) the chain is on the extracellular side. A helical membrane pass occupies residues 10–30 (WAFAFGLLGNIISFMTYLAPL). One can recognise a MtN3/slv 1 domain in the interval 13-98 (AFGLLGNIIS…AVYLVYAPKK (86 aa)). The Cytoplasmic segment spans residues 31–44 (PTFYRIYKSKSTQG). A helical transmembrane segment spans residues 45 to 65 (FQSVPYVVALFSAMLWIYYAL). The Extracellular segment spans residues 66 to 72 (LKSDECL). A helical membrane pass occupies residues 73 to 93 (LITINSAGCVIETIYIAVYLV). Residues 94–105 (YAPKKAKMFTAK) are Cytoplasmic-facing. The helical transmembrane segment at 106–126 (LLLLVNVGVFGLILLLTLLLS) threads the bilayer. Topologically, residues 127 to 133 (AGDRRIV) are extracellular. Residues 134-154 (VLGWVCVGFSVSVFVAPLSII) form a helical membrane-spanning segment. In terms of domain architecture, MtN3/slv 2 spans 134–217 (VLGWVCVGFS…MGLYAMYRNS (84 aa)). The Cytoplasmic portion of the chain corresponds to 155–167 (RLVVRTKSVEFMP). The chain crosses the membrane as a helical span at residues 168 to 188 (FSLSFSLTISAVVWFLYGLLI). At 189 to 192 (KDKY) the chain is on the extracellular side. A helical transmembrane segment spans residues 193-213 (VALPNVLGFSFGVIQMGLYAM). The Cytoplasmic portion of the chain corresponds to 214-303 (YRNSTPKAVL…AGAGEKKVAA (90 aa)). The disordered stretch occupies residues 266–290 (HPVDVESPPAEAPPEEDDKAAAATA).

It belongs to the SWEET sugar transporter family. Forms homooligomers and/or heterooligomers.

It localises to the cell membrane. Functionally, mediates both low-affinity uptake and efflux of sugar across the plasma membrane. In terms of biological role, confers blight susceptibility. Confers TAL effector-mediated susceptibility to Xanthomonas oryzae pv. oryzae. The chain is Bidirectional sugar transporter SWEET14 (SWEET14) from Oryza sativa subsp. japonica (Rice).